Here is an 862-residue protein sequence, read N- to C-terminus: Kinesin-like protein KIN-7J (862 aa).

The region spanning 9–331 is the Kinesin motor domain; the sequence is RIVVSVRLRP…LLFANCAKDV (323 aa). 95–102 contributes to the ATP binding site; it reads GQTSSGKT. Residues 340-415 are a coiled coil; sequence VMSDKALVKH…NFRKVASDGD (76 aa). Composition is skewed to basic and acidic residues over residues 475–499 and 518–531; these read EEHE…KEVQ and PEKK…KHSE. 2 disordered regions span residues 475–532 and 596–643; these read EEHE…HSES and DDSA…STCN. Over residues 598–610 the composition is skewed to polar residues; that stretch reads SASTTPSSETFRY. Basic and acidic residues predominate over residues 613–629; that stretch reads RRPEKVRKSLSPDEIAD.

Belongs to the TRAFAC class myosin-kinesin ATPase superfamily. Kinesin family. KIN-7 subfamily.

This is Kinesin-like protein KIN-7J from Oryza sativa subsp. japonica (Rice).